The following is a 262-amino-acid chain: MQYEIVSAGENVGDEPERERPVAQAAAAPGIPRPAALPAAGAARRGRDLPRERLLARGPAALSDAELVALLLGSGLPGHDVFALAHTLLTRFGSLRALLDAAPDDFKGLRGIGPARTAILVAVVELARRALAEKARERPLVDSPGAVDDYLRLLIGTRPREVFVCLFLDARHRLVQTEETAHGSLTRMAVYPREIVRRALALNAAALIVAHNHPSGAVRPSAADRHLTRVLRDALALVDVQLIDHFVVGANDTFSFAQAGWI.

The interval Met1–Arg45 is disordered. The segment covering Val22–Ala43 has biased composition (low complexity). Residues Leu140–Ile262 form the MPN domain. Positions 211, 213, and 224 each coordinate Zn(2+). The JAMM motif motif lies at His211 to Asp224.

It belongs to the UPF0758 family.

This is UPF0758 protein BTH_I0781 from Burkholderia thailandensis (strain ATCC 700388 / DSM 13276 / CCUG 48851 / CIP 106301 / E264).